The following is a 211-amino-acid chain: Pyridoxine/pyridoxamine 5'-phosphate oxidase (211 aa).

Substrate is bound by residues 7-10 and K65; that span reads RTDY. FMN is bound by residues 60–65, 75–76, R81, and K82; these read RIVLIK and FT. The substrate site is built by Y122, R126, and S130. Residues 139 to 140 and W183 each bind FMN; that span reads QS. 189–191 is a binding site for substrate; the sequence is RLH. R193 is a binding site for FMN.

The protein belongs to the pyridoxamine 5'-phosphate oxidase family. Homodimer. FMN serves as cofactor.

It catalyses the reaction pyridoxamine 5'-phosphate + O2 + H2O = pyridoxal 5'-phosphate + H2O2 + NH4(+). It carries out the reaction pyridoxine 5'-phosphate + O2 = pyridoxal 5'-phosphate + H2O2. Its pathway is cofactor metabolism; pyridoxal 5'-phosphate salvage; pyridoxal 5'-phosphate from pyridoxamine 5'-phosphate: step 1/1. It functions in the pathway cofactor metabolism; pyridoxal 5'-phosphate salvage; pyridoxal 5'-phosphate from pyridoxine 5'-phosphate: step 1/1. Catalyzes the oxidation of either pyridoxine 5'-phosphate (PNP) or pyridoxamine 5'-phosphate (PMP) into pyridoxal 5'-phosphate (PLP). The sequence is that of Pyridoxine/pyridoxamine 5'-phosphate oxidase from Herminiimonas arsenicoxydans.